Reading from the N-terminus, the 303-residue chain is Sulfate adenylyltransferase subunit 2 (303 aa).

Positions 282-303 are disordered; it reads SGRLIDHDESGSMEKKKREGYF.

Belongs to the PAPS reductase family. CysD subfamily. As to quaternary structure, heterodimer composed of CysD, the smaller subunit, and CysN.

It carries out the reaction sulfate + ATP + H(+) = adenosine 5'-phosphosulfate + diphosphate. Its pathway is sulfur metabolism; hydrogen sulfide biosynthesis; sulfite from sulfate: step 1/3. In terms of biological role, with CysN forms the ATP sulfurylase (ATPS) that catalyzes the adenylation of sulfate producing adenosine 5'-phosphosulfate (APS) and diphosphate, the first enzymatic step in sulfur assimilation pathway. APS synthesis involves the formation of a high-energy phosphoric-sulfuric acid anhydride bond driven by GTP hydrolysis by CysN coupled to ATP hydrolysis by CysD. The protein is Sulfate adenylyltransferase subunit 2 of Maricaulis maris (strain MCS10) (Caulobacter maris).